The sequence spans 316 residues: 2-phospho-L-lactate guanylyltransferase (316 aa).

Residues 72 to 85 (TGVSTEAVSTSTST) show a composition bias toward low complexity. 2 disordered regions span residues 72–107 (TGVSTEAVSTSTSTHADTTEHNAASDNYVSQSPTHT) and 119–138 (LRDDDDPDNEASTQERDGDK). The span at 92–107 (HNAASDNYVSQSPTHT) shows a compositional bias: polar residues.

The protein belongs to the CofC family. As to quaternary structure, homodimer.

It catalyses the reaction (2S)-2-phospholactate + GTP + H(+) = (2S)-lactyl-2-diphospho-5'-guanosine + diphosphate. Its pathway is cofactor biosynthesis; coenzyme F420 biosynthesis. In terms of biological role, guanylyltransferase that catalyzes the activation of (2S)-2-phospholactate (2-PL) as (2S)-lactyl-2-diphospho-5'-guanosine, via the condensation of 2-PL with GTP. It is involved in the biosynthesis of coenzyme F420, a hydride carrier cofactor. This is 2-phospho-L-lactate guanylyltransferase from Haloquadratum walsbyi (strain DSM 16790 / HBSQ001).